A 318-amino-acid chain; its full sequence is Galactofuranose-binding protein YtfQ (318 aa).

The N-terminal stretch at 1–21 (MWKRLLIVSAVSAAMSSMALA) is a signal peptide. Residues 34 to 38 (ESGWR), 111 to 112 (DR), Arg-167, Asn-220, and Asp-248 contribute to the beta-D-galactofuranose site. The cysteines at positions 150 and 214 are disulfide-linked.

It belongs to the bacterial solute-binding protein 2 family. The complex is composed of two ATP-binding proteins (YtfR), two transmembrane proteins (YtfT and YjfF) and a solute-binding protein (YtfQ).

The protein resides in the periplasm. Functionally, part of the ABC transporter complex YtfQRT-YjfF involved in galactofuranose transport. Binds to both alpha- and beta-galactofuranose. The sequence is that of Galactofuranose-binding protein YtfQ (ytfQ) from Escherichia coli (strain K12).